The following is a 312-amino-acid chain: Ribosomal protein L11 methyltransferase (312 aa).

S-adenosyl-L-methionine is bound by residues Thr-162, Gly-183, Asp-205, and Asn-248.

This sequence belongs to the methyltransferase superfamily. PrmA family.

It localises to the cytoplasm. It carries out the reaction L-lysyl-[protein] + 3 S-adenosyl-L-methionine = N(6),N(6),N(6)-trimethyl-L-lysyl-[protein] + 3 S-adenosyl-L-homocysteine + 3 H(+). Its function is as follows. Methylates ribosomal protein L11. The sequence is that of Ribosomal protein L11 methyltransferase from Geobacillus kaustophilus (strain HTA426).